The sequence spans 566 residues: MKQSKLFMPTLREVPSDAEAISHQLLLRAGFMRQNAAGIYSYLPLAKRVLSKIETIIRQEMEGAGAQELLMPAIQPAELWEETGRWDIYGPELMRLTDRHDRRFALGATHEELITSIVRDELNSYKKLPVNLFQIQMKYRDERRPRFGLLRGREFIMKDAYSFHSTQESLEEEYQNMFDAYTKIFTRVGLEFRPVVADSGAIGGSGTHEFHALAAIGEDTIVYSDQSDYAANLEMAESVDQYTKQDKAPEALEEVHTGDAKTIEAVSSVLGLPEQESIKTVVFKTEQGLVMALVRGDHEVNDIKLKNYLGALDIMMATDEEIEQALHSTPGTLGPIGADMKIVADYAVRALTNSVCGANKSETHYVHVDPSRDFEAEYTDLRFVEEGDVSPDGQGHVKFARGIEVGQVFKLGTRYSEGMNATFLDEGGKAQPLIMGCYGIGVSRTMSAVVEQHYDERGIIWPKAIAPFDVHLIAVNGKNAEQLEVAETVYRELTAAGFSVLFDDRKERAGVKFADADLIGLPVRINVGKKAPDGIVELKARRGGEAEEIQQADLLEAVRSLYEGLQ.

It belongs to the class-II aminoacyl-tRNA synthetase family. ProS type 1 subfamily. Homodimer.

Its subcellular location is the cytoplasm. The catalysed reaction is tRNA(Pro) + L-proline + ATP = L-prolyl-tRNA(Pro) + AMP + diphosphate. In terms of biological role, catalyzes the attachment of proline to tRNA(Pro) in a two-step reaction: proline is first activated by ATP to form Pro-AMP and then transferred to the acceptor end of tRNA(Pro). As ProRS can inadvertently accommodate and process non-cognate amino acids such as alanine and cysteine, to avoid such errors it has two additional distinct editing activities against alanine. One activity is designated as 'pretransfer' editing and involves the tRNA(Pro)-independent hydrolysis of activated Ala-AMP. The other activity is designated 'posttransfer' editing and involves deacylation of mischarged Ala-tRNA(Pro). The misacylated Cys-tRNA(Pro) is not edited by ProRS. In Exiguobacterium sibiricum (strain DSM 17290 / CCUG 55495 / CIP 109462 / JCM 13490 / 255-15), this protein is Proline--tRNA ligase.